Reading from the N-terminus, the 181-residue chain is Proteinase inhibitor B (181 aa).

An N-terminal signal peptide occupies residues 1–24 (MAASNALLLISGALLISLAVLCQG). Intrachain disulfides connect Cys-67–Cys-113, Cys-134–Cys-143, and Cys-136–Cys-139.

It belongs to the protease inhibitor I3 (leguminous Kunitz-type inhibitor) family.

It localises to the secreted. In terms of biological role, possesses two reactive sites. Inhibits two molecules of trypsin simultaneously. Inhibits efficiently kallikrein, but chymotrypsin weakly. In Sagittaria sagittifolia (Arrowhead), this protein is Proteinase inhibitor B.